Reading from the N-terminus, the 215-residue chain is Probable nicotinate-nucleotide adenylyltransferase (215 aa).

This sequence belongs to the NadD family.

The enzyme catalyses nicotinate beta-D-ribonucleotide + ATP + H(+) = deamido-NAD(+) + diphosphate. Its pathway is cofactor biosynthesis; NAD(+) biosynthesis; deamido-NAD(+) from nicotinate D-ribonucleotide: step 1/1. In terms of biological role, catalyzes the reversible adenylation of nicotinate mononucleotide (NaMN) to nicotinic acid adenine dinucleotide (NaAD). This chain is Probable nicotinate-nucleotide adenylyltransferase, found in Coxiella burnetii (strain RSA 331 / Henzerling II).